Here is a 257-residue protein sequence, read N- to C-terminus: Imidazole glycerol phosphate synthase subunit HisF (257 aa).

Catalysis depends on residues Asp11 and Asp130.

Belongs to the HisA/HisF family. Heterodimer of HisH and HisF.

Its subcellular location is the cytoplasm. It carries out the reaction 5-[(5-phospho-1-deoxy-D-ribulos-1-ylimino)methylamino]-1-(5-phospho-beta-D-ribosyl)imidazole-4-carboxamide + L-glutamine = D-erythro-1-(imidazol-4-yl)glycerol 3-phosphate + 5-amino-1-(5-phospho-beta-D-ribosyl)imidazole-4-carboxamide + L-glutamate + H(+). Its pathway is amino-acid biosynthesis; L-histidine biosynthesis; L-histidine from 5-phospho-alpha-D-ribose 1-diphosphate: step 5/9. In terms of biological role, IGPS catalyzes the conversion of PRFAR and glutamine to IGP, AICAR and glutamate. The HisF subunit catalyzes the cyclization activity that produces IGP and AICAR from PRFAR using the ammonia provided by the HisH subunit. This chain is Imidazole glycerol phosphate synthase subunit HisF, found in Shewanella baltica (strain OS155 / ATCC BAA-1091).